The primary structure comprises 113 residues: MHELSLCQSAVEIIQRQAEQHDVKRVTAVWLEIGALSCVEESAVRFSFEIVCHGTVAQGCDLHIVYKPAQAWCWDCSQVVEIHQHDAQCPLCHGERLRVDTGDSLIVKSIEVE.

His2 and Glu3 together coordinate Ni(2+). Zn(2+) is bound by residues Cys73, Cys76, Cys89, and Cys92.

It belongs to the HypA/HybF family. HybF subfamily. In terms of assembly, monomer.

In terms of biological role, involved in the maturation of [NiFe] hydrogenases. Required for nickel insertion into the metal center of the hydrogenase. HybF is involved in maturation of hydrogenases 1 and 2. It may partially substitute for the function of HypA and vice versa. The polypeptide is Hydrogenase maturation factor HybF (Escherichia coli (strain K12)).